Reading from the N-terminus, the 1487-residue chain is Murinoglobulin-1 (1487 aa).

Positions 1–24 are cleaved as a signal peptide; that stretch reads MKKNREAQLCLFSALLAFLPFASL. A disulfide bond links cysteine 48 and cysteine 86. N-linked (GlcNAc...) asparagine glycans are attached at residues asparagine 55 and asparagine 247. 2 disulfides stabilise this stretch: cysteine 251–cysteine 283 and cysteine 269–cysteine 295. Asparagine 301, asparagine 321, asparagine 393, and asparagine 508 each carry an N-linked (GlcNAc...) asparagine glycan. Disulfide bonds link cysteine 468/cysteine 563, cysteine 595/cysteine 784, and cysteine 643/cysteine 689. Residues 686-745 are bait region; sequence PTYCYEMNMVVLSAPAVESELSPRGGEFEMMPLGVNKSPLPKEPPRKDPPPKDPVIETIR. 3 N-linked (GlcNAc...) asparagine glycosylation sites follow: asparagine 760, asparagine 787, and asparagine 882. 4 cysteine pairs are disulfide-bonded: cysteine 860–cysteine 896, cysteine 934–cysteine 1334, cysteine 1092–cysteine 1140, and cysteine 1365–cysteine 1480. Residues 985-988 constitute a cross-link (isoglutamyl cysteine thioester (Cys-Gln)); that stretch reads CGEQ. A glycan (N-linked (GlcNAc...) asparagine) is linked at asparagine 1004. Asparagine 1153, asparagine 1324, and asparagine 1437 each carry an N-linked (GlcNAc...) asparagine glycan.

This sequence belongs to the protease inhibitor I39 (alpha-2-macroglobulin) family. As to quaternary structure, monomer. Plasma.

The protein localises to the secreted. Functionally, a proteinase activates the inhibitor by specific proteolysis in the bait region, which, by an unknown mechanism leads to reaction at the cysteinyl-glutamyl internal thiol ester site and to a conformational change, whereby the proteinase is trapped and/or covalently bound to the inhibitor. While in the tetrameric proteinase inhibitors steric inhibition is sufficiently strong, monomeric forms need a covalent linkage between the activated glutamyl residue of the original thiol ester and a terminal amino group of a lysine or another nucleophilic group on the proteinase, for inhibition to be effective. The sequence is that of Murinoglobulin-1 from Rattus norvegicus (Rat).